The sequence spans 77 residues: Large ribosomal subunit protein bL31 (77 aa).

Belongs to the bacterial ribosomal protein bL31 family. Type A subfamily. As to quaternary structure, part of the 50S ribosomal subunit.

Functionally, binds the 23S rRNA. This is Large ribosomal subunit protein bL31 from Paramagnetospirillum magneticum (strain ATCC 700264 / AMB-1) (Magnetospirillum magneticum).